Consider the following 356-residue polypeptide: MTKIAVLPGDGIGTEIVAEAVKVLKTLGETFEMETAPVGGAGYEAKGHPLPEDTLKLAKEADAILFGAVGDWKYDTLPRELRPEQAILGLRKHLQLFANFRPAICYPELAGASSMKPEIVAGLDILIVRELTGDIYFGQPRGVRAAPDGLFAGAREGFDTMRYSEPEIRRIAHVAFQAAAKRGKKLCSVDKANVLETFQFWKDIVTDVHKEYPEVELSHMYVDNAAMQLVKAPKNFDVVVTGNMFGDILSDEAAMLTGSIGMLPSASLDANNKGLYEPSHGSAPDIAGKGIANPLATILSAAMMLRYTLGKAEQADRIENAVKKVLAQGYRTGDILTPGCKQVGTVEMGDAVVAAL.

Residues R91, R101, R129, and D223 each coordinate substrate. The Mg(2+) site is built by D223, D247, and D251. 281-293 (GSAPDIAGKGIAN) contributes to the NAD(+) binding site.

It belongs to the isocitrate and isopropylmalate dehydrogenases family. LeuB type 1 subfamily. In terms of assembly, homodimer. Mg(2+) serves as cofactor. It depends on Mn(2+) as a cofactor.

It is found in the cytoplasm. It carries out the reaction (2R,3S)-3-isopropylmalate + NAD(+) = 4-methyl-2-oxopentanoate + CO2 + NADH. The protein operates within amino-acid biosynthesis; L-leucine biosynthesis; L-leucine from 3-methyl-2-oxobutanoate: step 3/4. In terms of biological role, catalyzes the oxidation of 3-carboxy-2-hydroxy-4-methylpentanoate (3-isopropylmalate) to 3-carboxy-4-methyl-2-oxopentanoate. The product decarboxylates to 4-methyl-2 oxopentanoate. This chain is 3-isopropylmalate dehydrogenase, found in Ralstonia nicotianae (strain ATCC BAA-1114 / GMI1000) (Ralstonia solanacearum).